A 2690-amino-acid polypeptide reads, in one-letter code: Probable polyketide synthase 28 (2690 aa).

The region spanning 15–443 (YGDVAVIGIG…GSNVCLILSE (429 aa)) is the Ketosynthase family 3 (KS3) domain. Catalysis depends on for beta-ketoacyl synthase activity residues C187, H326, and H366. Residues 651–684 (GVSADIIVGHSLGELSSSYSSGMIDFETLCHLIY) are acyl/malonyl transferases. S661 functions as the For acyl/malonyl transferase activity in the catalytic mechanism. The stretch at 906–934 (NFKSQLTNINNNNNNINNNNNNNNNNNNN) forms a coiled coil. The tract at residues 916 to 946 (NNNNNINNNNNNNNNNNNNNNNNNNNNNNNN) is disordered. Residues 973-1102 (HEKITNEGPS…GNFSLFKHNS (130 aa)) form an N-terminal hotdog fold region. The PKS/mFAS DH domain occupies 973–1285 (HEKITNEGPS…CSSVSLANPS (313 aa)). The active-site Proton acceptor; for dehydratase activity is the H1014. Residues 1119–1285 (NFTTISKHDF…CSSVSLANPS (167 aa)) form a C-terminal hotdog fold region. D1188 serves as the catalytic Proton donor; for dehydratase activity. The tract at residues 1401–1429 (LNHHNNSENKNKNNNNNNNSNNNENSNNE) is disordered. Residues 1412 to 1429 (KNNNNNNNSNNNENSNNE) are compositionally biased toward low complexity. Residues 2594-2671 (SDNEFIHSTI…QSIDIIKFGY (78 aa)) enclose the Carrier domain. S2631 is subject to O-(pantetheine 4'-phosphoryl)serine.

Pantetheine 4'-phosphate serves as cofactor.

Its function is as follows. Probable polyketide synthase. This chain is Probable polyketide synthase 28 (pks28), found in Dictyostelium discoideum (Social amoeba).